Reading from the N-terminus, the 207-residue chain is Small ribosomal subunit protein uS4A (207 aa).

The region spanning 98–158 (TRLDNVAYRL…EKSKSSAKFK (61 aa)) is the S4 RNA-binding domain.

Belongs to the universal ribosomal protein uS4 family. In terms of assembly, part of the 30S ribosomal subunit. Contacts protein S5. The interaction surface between S4 and S5 is involved in control of translational fidelity.

One of the primary rRNA binding proteins, it binds directly to 16S rRNA where it nucleates assembly of the body of the 30S subunit. In terms of biological role, with S5 and S12 plays an important role in translational accuracy. This Alkaliphilus oremlandii (strain OhILAs) (Clostridium oremlandii (strain OhILAs)) protein is Small ribosomal subunit protein uS4A.